We begin with the raw amino-acid sequence, 189 residues long: Peptidyl-tRNA hydrolase (189 aa).

A tRNA-binding site is contributed by Tyr-14. Residue His-19 is the Proton acceptor of the active site. 3 residues coordinate tRNA: Tyr-64, Asn-66, and Asn-112.

Belongs to the PTH family. Monomer.

Its subcellular location is the cytoplasm. It carries out the reaction an N-acyl-L-alpha-aminoacyl-tRNA + H2O = an N-acyl-L-amino acid + a tRNA + H(+). Functionally, hydrolyzes ribosome-free peptidyl-tRNAs (with 1 or more amino acids incorporated), which drop off the ribosome during protein synthesis, or as a result of ribosome stalling. Catalyzes the release of premature peptidyl moieties from peptidyl-tRNA molecules trapped in stalled 50S ribosomal subunits, and thus maintains levels of free tRNAs and 50S ribosomes. The sequence is that of Peptidyl-tRNA hydrolase from Clostridium botulinum (strain 657 / Type Ba4).